The sequence spans 510 residues: Probable cytosol aminopeptidase (510 aa).

2 residues coordinate Mn(2+): lysine 282 and aspartate 287. Lysine 294 is a catalytic residue. The Mn(2+) site is built by aspartate 305, aspartate 364, and glutamate 366. Arginine 368 is a catalytic residue.

The protein belongs to the peptidase M17 family. Mn(2+) serves as cofactor.

The protein resides in the cytoplasm. The enzyme catalyses Release of an N-terminal amino acid, Xaa-|-Yaa-, in which Xaa is preferably Leu, but may be other amino acids including Pro although not Arg or Lys, and Yaa may be Pro. Amino acid amides and methyl esters are also readily hydrolyzed, but rates on arylamides are exceedingly low.. The catalysed reaction is Release of an N-terminal amino acid, preferentially leucine, but not glutamic or aspartic acids.. Its function is as follows. Presumably involved in the processing and regular turnover of intracellular proteins. Catalyzes the removal of unsubstituted N-terminal amino acids from various peptides. In Cupriavidus metallidurans (strain ATCC 43123 / DSM 2839 / NBRC 102507 / CH34) (Ralstonia metallidurans), this protein is Probable cytosol aminopeptidase.